A 430-amino-acid chain; its full sequence is Acetyl-CoA acetyltransferase FG05087, mitochondrial (430 aa).

Residues 1–32 (MTVTQLRSAGRLAQLAGHVNGARQFSTRPALR) constitute a mitochondrion transit peptide. Cys122 acts as the Acyl-thioester intermediate in catalysis. A K(+)-binding site is contributed by Tyr217. Lys260 provides a ligand contact to CoA. Ala278 is a K(+) binding site. Ser282 serves as a coordination point for CoA. Catalysis depends on proton acceptor residues His385 and Cys413. Asn414 contributes to the chloride binding site.

This sequence belongs to the thiolase-like superfamily. Thiolase family. Homotetramer. It depends on K(+) as a cofactor.

It localises to the mitochondrion. The enzyme catalyses 2 acetyl-CoA = acetoacetyl-CoA + CoA. Mitochondrial acetyl-CoA acetyltransferase that catalyzes both the formation and degradation of acetoacetyl-CoA. Seems not to be involved in ergosterol biosynthesis. Plays an important role in growth, morphogenesis and maintaining mitochondrial function including the response to oxidative stresses. The polypeptide is Acetyl-CoA acetyltransferase FG05087, mitochondrial (Gibberella zeae (strain ATCC MYA-4620 / CBS 123657 / FGSC 9075 / NRRL 31084 / PH-1) (Wheat head blight fungus)).